Consider the following 487-residue polypeptide: Citrate/succinate antiporter (487 aa).

14 helical membrane-spanning segments follow: residues 11–31, 60–80, 95–115, 138–158, 190–210, 214–234, 237–257, 288–308, 309–329, 345–365, 379–399, 401–421, 424–444, and 463–483; these read LLAP…DGMP, FIAV…AKEL, GLAG…IFAL, TLTL…FTPS, IGGY…SMFV, APNV…ISWL, FLCF…LSYV, WTLI…SEVI, NATA…VVPW, LATL…DWFA, ATVI…ASLS, HTAT…GVPM, LCIL…YATG, and LGAI…WPIL.

This sequence belongs to the SLC13A/DASS transporter (TC 2.A.47) family. DIT1 subfamily.

The protein localises to the cell inner membrane. Functionally, responsible for the uptake of citrate in exchange to the efflux of succinate. Has a relatively broad specificity for C(4)-dicarboxylates and tricarboxylates. In Escherichia coli O157:H7, this protein is Citrate/succinate antiporter (citT).